The chain runs to 346 residues: UDP-3-O-acylglucosamine N-acyltransferase (346 aa).

Histidine 253 serves as the catalytic Proton acceptor.

The protein belongs to the transferase hexapeptide repeat family. LpxD subfamily. As to quaternary structure, homotrimer.

The enzyme catalyses a UDP-3-O-[(3R)-3-hydroxyacyl]-alpha-D-glucosamine + a (3R)-hydroxyacyl-[ACP] = a UDP-2-N,3-O-bis[(3R)-3-hydroxyacyl]-alpha-D-glucosamine + holo-[ACP] + H(+). It participates in bacterial outer membrane biogenesis; LPS lipid A biosynthesis. In terms of biological role, catalyzes the N-acylation of UDP-3-O-acylglucosamine using 3-hydroxyacyl-ACP as the acyl donor. Is involved in the biosynthesis of lipid A, a phosphorylated glycolipid that anchors the lipopolysaccharide to the outer membrane of the cell. The protein is UDP-3-O-acylglucosamine N-acyltransferase of Rickettsia typhi (strain ATCC VR-144 / Wilmington).